A 254-amino-acid polypeptide reads, in one-letter code: Proteasome subunit alpha type-7 (254 aa).

A glycan (O-linked (GlcNAc) serine) is linked at Ser136. Tyr159 is modified (phosphotyrosine). Lys233 carries the post-translational modification N6-acetyllysine.

Belongs to the peptidase T1A family. The 26S proteasome consists of a 20S proteasome core and two 19S regulatory subunits. The 20S proteasome core is a barrel-shaped complex made of 28 subunits that are arranged in four stacked rings. The two outer rings are each formed by seven alpha subunits, and the two inner rings are formed by seven beta subunits. The proteolytic activity is exerted by three beta-subunits PSMB5, PSMB6 and PSMB7. PSMA7 interacts directly with the PSMG1-PSMG2 heterodimer which promotes 20S proteasome assembly. Interacts with HIF1A. Interacts with RAB7A. Interacts with PRKN. Interacts with ABL1 and ABL2. Interacts with EMAP2. Interacts with MAVS. In terms of tissue distribution, ubiquitous.

It localises to the cytoplasm. The protein resides in the nucleus. Functionally, component of the 20S core proteasome complex involved in the proteolytic degradation of most intracellular proteins. This complex plays numerous essential roles within the cell by associating with different regulatory particles. Associated with two 19S regulatory particles, forms the 26S proteasome and thus participates in the ATP-dependent degradation of ubiquitinated proteins. The 26S proteasome plays a key role in the maintenance of protein homeostasis by removing misfolded or damaged proteins that could impair cellular functions, and by removing proteins whose functions are no longer required. Associated with the PA200 or PA28, the 20S proteasome mediates ubiquitin-independent protein degradation. This type of proteolysis is required in several pathways including spermatogenesis (20S-PA200 complex) or generation of a subset of MHC class I-presented antigenic peptides (20S-PA28 complex). Inhibits the transactivation function of HIF-1A under both normoxic and hypoxia-mimicking conditions. The interaction with EMAP2 increases the proteasome-mediated HIF-1A degradation under the hypoxic conditions. Plays a role in hepatitis C virus internal ribosome entry site-mediated translation. Mediates nuclear translocation of the androgen receptor (AR) and thereby enhances androgen-mediated transactivation. Promotes MAVS degradation and thereby negatively regulates MAVS-mediated innate immune response. In Rattus norvegicus (Rat), this protein is Proteasome subunit alpha type-7 (Psma7).